A 272-amino-acid polypeptide reads, in one-letter code: Alkaline ceramidase (272 aa).

The next 2 membrane-spanning stretches (helical) occupy residues 34–54 and 61–81; these read FANT…IMLL and VNGG…ASTY. H83 contacts Zn(2+). 4 helical membrane passes run 96–116, 124–144, 148–168, and 183–203; these read LSLV…MKWF, LTLV…LCFL, LNAI…NYEG, and ILAL…LCDF. 2 residues coordinate Zn(2+): H213 and H217. A helical transmembrane segment spans residues 214 to 234; that stretch reads ALFHLLAGLAGYTIFIMFSMI. Residue N256 is glycosylated (N-linked (GlcNAc...) asparagine).

The protein belongs to the alkaline ceramidase family. The cofactor is Zn(2+).

It is found in the membrane. It catalyses the reaction an N-acyl-sphingoid base + H2O = a sphingoid base + a fatty acid. The catalysed reaction is an N-acylsphing-4-enine + H2O = sphing-4-enine + a fatty acid. It carries out the reaction an N-acyl-15-methylhexadecasphing-4-enine + H2O = 15-methylhexadecasphing-4-enine + a fatty acid. Its pathway is lipid metabolism; sphingolipid metabolism. Hydrolyzes the sphingolipid ceramide into sphingoid base and free fatty acid. C.elegans contain specific sphingoid bases, which are unique or different in structure compared to the sphingoid bases found in other animals. Two examples of these distinctive compounds are: 15-methylhexadecasphinganine and 15-methylhexadecasphing-4-enine. The protein is Alkaline ceramidase of Caenorhabditis elegans.